A 373-amino-acid polypeptide reads, in one-letter code: Phospho-N-acetylmuramoyl-pentapeptide-transferase (373 aa).

A run of 10 helical transmembrane segments spans residues 28-48 (LLTVITSLAFSIILGPRTIAY), 72-92 (TPTMGGVLILTSIGFSTLCWA), 94-114 (LANPYVWILMVVMVIFGAVGW), 135-155 (YFWLSVGALFVGSSLYYIASQ), 177-197 (IVPLSALPLGLGFIIFTYFVI), 212-232 (GLAILPVVFVAAGLGVFSYVS), 252-272 (VTIVCAAMIGSGLGFLWYNAH), 276-296 (VFMGDVGALALGAMLGTIAVM), 301-321 (IAFAIMGGLFVAEALSVILQV), and 350-370 (QVVVRFWIIAILLVVLGLMTL).

The protein belongs to the glycosyltransferase 4 family. MraY subfamily. The cofactor is Mg(2+).

The protein localises to the cell inner membrane. It catalyses the reaction UDP-N-acetyl-alpha-D-muramoyl-L-alanyl-gamma-D-glutamyl-meso-2,6-diaminopimeloyl-D-alanyl-D-alanine + di-trans,octa-cis-undecaprenyl phosphate = di-trans,octa-cis-undecaprenyl diphospho-N-acetyl-alpha-D-muramoyl-L-alanyl-D-glutamyl-meso-2,6-diaminopimeloyl-D-alanyl-D-alanine + UMP. It functions in the pathway cell wall biogenesis; peptidoglycan biosynthesis. Functionally, catalyzes the initial step of the lipid cycle reactions in the biosynthesis of the cell wall peptidoglycan: transfers peptidoglycan precursor phospho-MurNAc-pentapeptide from UDP-MurNAc-pentapeptide onto the lipid carrier undecaprenyl phosphate, yielding undecaprenyl-pyrophosphoryl-MurNAc-pentapeptide, known as lipid I. This is Phospho-N-acetylmuramoyl-pentapeptide-transferase from Psychrobacter sp. (strain PRwf-1).